We begin with the raw amino-acid sequence, 212 residues long: MIGMDHFEREAYEDGYRVIAGVDEAGRGPLAGPVVAAAVILPHGYSHPEITDSKKLSAGKREKLYEVIKRDALAIGVGVVESPVIDQVNILRATLRAMAEAVDDLSIRPDFLLVDGLHRIFLNISQKTIVKGDTLSVSIASASIIAKVSRDRIMEIYHRQFPQYNFLKNKGYGTREHREAIQNFGFCKIHRRSFKVKSTKPQSLQTVNLFDF.

The 190-residue stretch at arginine 17–threonine 206 folds into the RNase H type-2 domain. Residues aspartate 23, glutamate 24, and aspartate 115 each coordinate a divalent metal cation.

This sequence belongs to the RNase HII family. Mn(2+) is required as a cofactor. Requires Mg(2+) as cofactor.

The protein localises to the cytoplasm. The enzyme catalyses Endonucleolytic cleavage to 5'-phosphomonoester.. Its function is as follows. Endonuclease that specifically degrades the RNA of RNA-DNA hybrids. This is Ribonuclease HII from Syntrophus aciditrophicus (strain SB).